The sequence spans 347 residues: Epimerase family protein SDR39U1 homolog, chloroplastic (347 aa).

Residues 1 to 37 constitute a chloroplast transit peptide; the sequence is MELLCSPTSLSSSFALSSALLVPRSFSMPGTRRFMVL. NADP(+) is bound by residues 54-57, 76-77, 115-119, and R136; these read TGFI, TR, and LAGLP.

As to quaternary structure, can form homodimers. In terms of tissue distribution, expressed in leaves, stems and flower buds.

It localises to the plastid. Its subcellular location is the chloroplast inner membrane. The protein localises to the chloroplast. Functionally, putative NADP-dependent oxidoreductase that acts as a positive regulator of chloroplast division. May play a role at an early stage of the division process. This is Epimerase family protein SDR39U1 homolog, chloroplastic from Arabidopsis thaliana (Mouse-ear cress).